Reading from the N-terminus, the 374-residue chain is tRNA (guanine(26)-N(2))-dimethyltransferase (374 aa).

One can recognise a Trm1 methyltransferase domain in the interval 1 to 367; it reads MILKEGEVVF…ATLKNVIEAI (367 aa). Residues R34, R66, D86, D113, and A114 each coordinate S-adenosyl-L-methionine.

It belongs to the class I-like SAM-binding methyltransferase superfamily. Trm1 family.

The enzyme catalyses guanosine(26) in tRNA + 2 S-adenosyl-L-methionine = N(2)-dimethylguanosine(26) in tRNA + 2 S-adenosyl-L-homocysteine + 2 H(+). Its function is as follows. Dimethylates a single guanine residue at position 26 of a number of tRNAs using S-adenosyl-L-methionine as donor of the methyl groups. The polypeptide is tRNA (guanine(26)-N(2))-dimethyltransferase (Methanocaldococcus jannaschii (strain ATCC 43067 / DSM 2661 / JAL-1 / JCM 10045 / NBRC 100440) (Methanococcus jannaschii)).